The primary structure comprises 249 residues: 23S rRNA (guanosine-2'-O-)-methyltransferase RlmB (249 aa).

Residues Gly200, Ile220, and Leu229 each contribute to the S-adenosyl-L-methionine site.

It belongs to the class IV-like SAM-binding methyltransferase superfamily. RNA methyltransferase TrmH family. RlmB subfamily.

Its subcellular location is the cytoplasm. It carries out the reaction guanosine(2251) in 23S rRNA + S-adenosyl-L-methionine = 2'-O-methylguanosine(2251) in 23S rRNA + S-adenosyl-L-homocysteine + H(+). Its function is as follows. Specifically methylates the ribose of guanosine 2251 in 23S rRNA. The polypeptide is 23S rRNA (guanosine-2'-O-)-methyltransferase RlmB (Xanthomonas axonopodis pv. citri (strain 306)).